Reading from the N-terminus, the 433-residue chain is Pyrimidine-nucleoside phosphorylase (433 aa).

81–83 (KHS) serves as a coordination point for phosphate. K(+) contacts are provided by G88 and T90. Phosphate is bound by residues T92, 108–110 (KMS), and T120. Residues R168 and K187 each contribute to the substrate site. K(+)-binding residues include L243, A246, and E255.

Belongs to the thymidine/pyrimidine-nucleoside phosphorylase family. As to quaternary structure, homodimer. The cofactor is K(+).

It carries out the reaction uridine + phosphate = alpha-D-ribose 1-phosphate + uracil. It catalyses the reaction thymidine + phosphate = 2-deoxy-alpha-D-ribose 1-phosphate + thymine. The catalysed reaction is 2'-deoxyuridine + phosphate = 2-deoxy-alpha-D-ribose 1-phosphate + uracil. In terms of biological role, catalyzes phosphorolysis of the pyrimidine nucleosides uridine, thymidine and 2'-deoxyuridine with the formation of the corresponding pyrimidine base and ribose-1-phosphate. This is Pyrimidine-nucleoside phosphorylase (pdp) from Staphylococcus aureus (strain NCTC 8325 / PS 47).